A 705-amino-acid polypeptide reads, in one-letter code: Polyribonucleotide nucleotidyltransferase (705 aa).

Mg(2+)-binding residues include D492 and D498. Residues 559–618 (PLMITMKVSPDKIRHIIGPGGKIINKIIDETGVEIDIDDDGSVYILAQDQESGNRAKEII) form the KH domain. One can recognise an S1 motif domain in the interval 628–696 (GDIYEGRVKK…ELGRINLSRK (69 aa)).

Belongs to the polyribonucleotide nucleotidyltransferase family. Requires Mg(2+) as cofactor.

It is found in the cytoplasm. The catalysed reaction is RNA(n+1) + phosphate = RNA(n) + a ribonucleoside 5'-diphosphate. Involved in mRNA degradation. Catalyzes the phosphorolysis of single-stranded polyribonucleotides processively in the 3'- to 5'-direction. The polypeptide is Polyribonucleotide nucleotidyltransferase (Halothermothrix orenii (strain H 168 / OCM 544 / DSM 9562)).